The following is a 113-amino-acid chain: U11-theraphotoxin-Hhn1a (113 aa).

An N-terminal signal peptide occupies residues Met-1–Ala-21. The propeptide occupies Asp-22–Arg-74. The tract at residues Glu-61–Asp-83 is disordered. Cystine bridges form between Cys-75–Cys-90, Cys-82–Cys-95, and Cys-89–Cys-110.

Belongs to the neurotoxin 14 (magi-1) family. 01 (HNTX-16) subfamily. As to expression, expressed by the venom gland.

The protein localises to the secreted. Functionally, probable ion channel inhibitor. In Cyriopagopus hainanus (Chinese bird spider), this protein is U11-theraphotoxin-Hhn1a.